The sequence spans 1415 residues: DNA-directed RNA polymerase subunit beta' (1415 aa).

Positions 214, 294, 301, and 304 each coordinate Zn(2+). Residues 1335 to 1351 (QNFVDSQGKPQSQSSFI) show a composition bias toward polar residues. Positions 1335–1390 (QNFVDSQGKPQSQSSFIDDSMSEFSPVKDKSGSVLDDSDFPPGNFDSDFPADNYDL) are disordered.

This sequence belongs to the RNA polymerase beta' chain family. RpoC2 subfamily. In terms of assembly, in cyanobacteria the RNAP catalytic core is composed of 2 alpha, 1 beta, 1 beta', 1 gamma and 1 omega subunit. When a sigma factor is associated with the core the holoenzyme is formed, which can initiate transcription. Requires Zn(2+) as cofactor.

It carries out the reaction RNA(n) + a ribonucleoside 5'-triphosphate = RNA(n+1) + diphosphate. DNA-dependent RNA polymerase catalyzes the transcription of DNA into RNA using the four ribonucleoside triphosphates as substrates. The polypeptide is DNA-directed RNA polymerase subunit beta' (Trichodesmium erythraeum (strain IMS101)).